Consider the following 351-residue polypeptide: Probable inactive tRNA-specific adenosine deaminase-like protein 3 (351 aa).

Methionine 1 carries the post-translational modification N-acetylmethionine. A disordered region spans residues 1–26 (MEPAPGLVEQPKCLEAGSPEPEPAPW). The region spanning 171 to 336 (AAMQSHMERA…PDLNHRFQVF (166 aa)) is the CMP/dCMP-type deaminase domain. The Zn(2+) site is built by histidine 223, cysteine 291, and cysteine 294.

It belongs to the cytidine and deoxycytidylate deaminase family. ADAT3 subfamily. Zn(2+) serves as cofactor.

The protein is Probable inactive tRNA-specific adenosine deaminase-like protein 3 (ADAT3) of Homo sapiens (Human).